Reading from the N-terminus, the 119-residue chain is Large ribosomal subunit protein bL20 (119 aa).

This sequence belongs to the bacterial ribosomal protein bL20 family.

Functionally, binds directly to 23S ribosomal RNA and is necessary for the in vitro assembly process of the 50S ribosomal subunit. It is not involved in the protein synthesizing functions of that subunit. The chain is Large ribosomal subunit protein bL20 from Stenotrophomonas maltophilia (strain R551-3).